A 37-amino-acid chain; its full sequence is LKCKNKVVPFLKCKNKVVPFLCYKMTLKKVTPKIKRG.

As to quaternary structure, heterotetramer composed of 2 hemextin A and 2 hemextin B chains; non-covalently linked. Does not exist as a complex in the crude venom. In terms of processing, may contain several disulfide bonds. Expressed by the venom gland.

It is found in the secreted. Its function is as follows. Hemextin B (monomer): does not show anticoagulant activity. Seems only to synergitically enhance hemextin A activity. In terms of biological role, hemextin AB complex: specifically inhibits the activation of FX (F10) by the TF-FVIIa complex (extrinsic tenase complex (ETC)) (IC(50)= 100 nM, Ki=50 nM) by non-competitively inhibiting the enzymatic activity of FVIIa. The protein is Hemextin B of Hemachatus haemachatus (Rinkhals).